Reading from the N-terminus, the 398-residue chain is Cyclic GMP-AMP synthase-like receptor (398 aa).

ATP contacts are provided by residues serine 57 and 69–71; that span reads EFD. Mg(2+)-binding residues include glutamate 69, aspartate 71, and aspartate 192. Residues aspartate 192 and 240-247 contribute to the GTP site; that span reads SLSFQEQE. Residues 244-247, lysine 265, and 277-281 each bind ATP; these read QEQE and SYYIK. The Mn(2+) site is built by isoleucine 288, glutamate 289, and aspartate 292.

This sequence belongs to the mab-21 family. Mg(2+) is required as a cofactor. It depends on Mn(2+) as a cofactor.

It catalyses the reaction GTP + ATP = 2',3'-cGAMP + 2 diphosphate. It carries out the reaction GTP + ATP = pppGp(2'-5')A + diphosphate. The enzyme catalyses pppGp(2'-5')A = 2',3'-cGAMP + diphosphate. Its activity is regulated as follows. The enzyme activity is specifically activated by double-stranded RNA (dsRNA). Its function is as follows. Nucleotidyltransferase that catalyzes the formation of cyclic GMP-AMP (2',3'-cGAMP) from ATP and GTP and plays a key role in innate immunity. Acts as a key sensor of double-stranded RNA (dsRNA), the presence of dsRNA in the cytoplasm being a danger signal that triggers the immune responses. Directly binds dsRNA, activating the nucleotidyltransferase activity, leading to synthesis of 2',3'-cGAMP, a second messenger that binds to and activates Sting, thereby triggering the antiviral immune response via activation of the NF-kappa-B transcription factor Rel (Relish). The protein is Cyclic GMP-AMP synthase-like receptor of Tribolium castaneum (Red flour beetle).